The sequence spans 372 residues: Serine/threonine-protein kinase 17B (372 aa).

The 261-residue stretch at 33–293 (TLTPKELGRG…AESCLSHSWL (261 aa)) folds into the Protein kinase domain. Residues 39–47 (LGRGKFAVV) and Lys-62 each bind ATP. The active-site Proton acceptor is Asp-158. The tract at residues 305–348 (EETSGSSQIQDLTLRSSEEKTSKSSCNGSCGAREDKENIPEDGS) is disordered. Positions 307-319 (TSGSSQIQDLTLR) are enriched in polar residues.

Belongs to the protein kinase superfamily. CAMK Ser/Thr protein kinase family. DAP kinase subfamily. As to quaternary structure, interacts with CHP1; the interaction induces CHP1 to translocate from the Golgi to the nucleus. Autophosphorylated.

It is found in the nucleus. Its subcellular location is the cell membrane. The protein resides in the endoplasmic reticulum-Golgi intermediate compartment. It catalyses the reaction L-seryl-[protein] + ATP = O-phospho-L-seryl-[protein] + ADP + H(+). The catalysed reaction is L-threonyl-[protein] + ATP = O-phospho-L-threonyl-[protein] + ADP + H(+). Its function is as follows. Acts as a positive regulator of apoptosis. Phosphorylates myosin light chains. The protein is Serine/threonine-protein kinase 17B (Stk17b) of Mus musculus (Mouse).